A 73-amino-acid chain; its full sequence is Small ribosomal subunit protein bS21 (73 aa).

The protein belongs to the bacterial ribosomal protein bS21 family.

In Parvibaculum lavamentivorans (strain DS-1 / DSM 13023 / NCIMB 13966), this protein is Small ribosomal subunit protein bS21.